We begin with the raw amino-acid sequence, 80 residues long: WAP four-disulfide core domain protein 15B (80 aa).

An N-terminal signal peptide occupies residues 1-20; it reads MKLLGLSLLAVTILLCCNMA. In terms of domain architecture, WAP spans 29-76; the sequence is VFSKPGYCPEYRVPCPFVLIPKCRRDKGCKDALKCCFFYCQMRCVDPW. 4 disulfides stabilise this stretch: Cys-36–Cys-64, Cys-43–Cys-68, Cys-51–Cys-63, and Cys-57–Cys-72.

Constitutively expressed in kidney and epididymis.

It is found in the secreted. In terms of biological role, antibacterial protein which inhibits the growth of E.coli and S.aureus. In Mus musculus (Mouse), this protein is WAP four-disulfide core domain protein 15B (Wfdc15b).